The sequence spans 292 residues: Ribosomal protein L11 methyltransferase (292 aa).

Residues T138, G159, D181, and N225 each coordinate S-adenosyl-L-methionine.

The protein belongs to the methyltransferase superfamily. PrmA family.

It localises to the cytoplasm. The catalysed reaction is L-lysyl-[protein] + 3 S-adenosyl-L-methionine = N(6),N(6),N(6)-trimethyl-L-lysyl-[protein] + 3 S-adenosyl-L-homocysteine + 3 H(+). Methylates ribosomal protein L11. This is Ribosomal protein L11 methyltransferase from Leuconostoc citreum (strain KM20).